The following is a 414-amino-acid chain: Esterase FrsA (414 aa).

It belongs to the FrsA family.

It catalyses the reaction a carboxylic ester + H2O = an alcohol + a carboxylate + H(+). Its function is as follows. Catalyzes the hydrolysis of esters. In Salmonella agona (strain SL483), this protein is Esterase FrsA.